A 228-amino-acid polypeptide reads, in one-letter code: Imidazole glycerol phosphate synthase subunit HisH (228 aa).

One can recognise a Glutamine amidotransferase type-1 domain in the interval D4–S218. C83 functions as the Nucleophile in the catalytic mechanism. Residues H193 and E195 contribute to the active site.

As to quaternary structure, heterodimer of HisH and HisF.

Its subcellular location is the cytoplasm. The catalysed reaction is 5-[(5-phospho-1-deoxy-D-ribulos-1-ylimino)methylamino]-1-(5-phospho-beta-D-ribosyl)imidazole-4-carboxamide + L-glutamine = D-erythro-1-(imidazol-4-yl)glycerol 3-phosphate + 5-amino-1-(5-phospho-beta-D-ribosyl)imidazole-4-carboxamide + L-glutamate + H(+). The enzyme catalyses L-glutamine + H2O = L-glutamate + NH4(+). It participates in amino-acid biosynthesis; L-histidine biosynthesis; L-histidine from 5-phospho-alpha-D-ribose 1-diphosphate: step 5/9. In terms of biological role, IGPS catalyzes the conversion of PRFAR and glutamine to IGP, AICAR and glutamate. The HisH subunit catalyzes the hydrolysis of glutamine to glutamate and ammonia as part of the synthesis of IGP and AICAR. The resulting ammonia molecule is channeled to the active site of HisF. This is Imidazole glycerol phosphate synthase subunit HisH from Thiobacillus denitrificans (strain ATCC 25259 / T1).